Consider the following 265-residue polypeptide: MEMO1 family protein Mbar_A1422 (265 aa).

This sequence belongs to the MEMO1 family.

The polypeptide is MEMO1 family protein Mbar_A1422 (Methanosarcina barkeri (strain Fusaro / DSM 804)).